We begin with the raw amino-acid sequence, 577 residues long: Adenine deaminase (577 aa).

The protein belongs to the metallo-dependent hydrolases superfamily. Adenine deaminase family. The cofactor is Mn(2+).

It carries out the reaction adenine + H2O + H(+) = hypoxanthine + NH4(+). The chain is Adenine deaminase from Bacillus velezensis (strain DSM 23117 / BGSC 10A6 / LMG 26770 / FZB42) (Bacillus amyloliquefaciens subsp. plantarum).